The sequence spans 246 residues: Serine protease 1 (246 aa).

A signal peptide spans 1–17 (MKTFIFLALLGAAVAFP). A propeptide spans 18–23 (VDDDDK) (activation peptide). The Peptidase S1 domain maps to 24–244 (IVGGYTCGAN…YVSWIKQTIA (221 aa)). 6 disulfides stabilise this stretch: C30-C160, C48-C64, C132-C233, C139-C206, C171-C185, and C196-C220. H63 acts as the Charge relay system in catalysis. E75, N77, V80, and E85 together coordinate Ca(2+). The Charge relay system role is filled by D107. Residues 194 to 195 (DS), 197 to 198 (QG), and S200 contribute to the substrate site. The Charge relay system role is filled by S200.

It belongs to the peptidase S1 family. Interacts with SERPINA1. Requires Ca(2+) as cofactor. Post-translationally, autocatalytic cleavage after Lys-23 leads to beta-trypsin by releasing a terminal hexapeptide. Subsequent cleavage after Lys-148 leads to alpha-trypsin. Further cleavage after Lys-193 yields pseudotrypsin. A cleavage may also occur after Arg-122. Not sulfated on tyrosine residue(s). In terms of tissue distribution, synthesized in the acinar cells of the pancreas.

The protein resides in the secreted. It is found in the extracellular space. It carries out the reaction Preferential cleavage: Arg-|-Xaa, Lys-|-Xaa.. Its activity is regulated as follows. Is inhibited by scorpion cyclotide trypsin inhibitor TopI1. The chain is Serine protease 1 (PRSS1) from Bos taurus (Bovine).